The primary structure comprises 458 residues: Elongation factor 1-alpha (458 aa).

Gly2 carries the post-translational modification N,N,N-trimethylglycine. At Lys3 the chain carries N6,N6-dimethyllysine; alternate. Lys3 carries the post-translational modification N6-methyllysine; alternate. Positions 5 to 240 (KTHVNVVVIG…DAIEPPVRPS (236 aa)) constitute a tr-type G domain. The interval 14–21 (GHVDSGKS) is G1. A GTP-binding site is contributed by 14-21 (GHVDSGKS). At Lys30 the chain carries N6-methyllysine. The G2 stretch occupies residues 70-74 (GITID). Lys79 bears the N6,N6,N6-trimethyllysine mark. The interval 91-94 (DAPG) is G3. GTP contacts are provided by residues 91–95 (DAPGH) and 153–156 (NKMD). The G4 stretch occupies residues 153-156 (NKMD). A G5 region spans residues 192 to 194 (SGW). The residue at position 316 (Lys316) is an N6,N6-dimethyllysine; alternate. At Lys316 the chain carries N6-methyllysine; alternate. Lys390 is modified (N6-methyllysine).

This sequence belongs to the TRAFAC class translation factor GTPase superfamily. Classic translation factor GTPase family. EF-Tu/EF-1A subfamily.

The protein localises to the cytoplasm. In terms of biological role, this protein promotes the GTP-dependent binding of aminoacyl-tRNA to the A-site of ribosomes during protein biosynthesis. The sequence is that of Elongation factor 1-alpha (TEF-2) from Mucor circinelloides f. lusitanicus (Mucor racemosus var. lusitanicus).